The chain runs to 785 residues: Polyribonucleotide nucleotidyltransferase (785 aa).

2 residues coordinate Mg(2+): aspartate 516 and aspartate 522. In terms of domain architecture, KH spans 582-641 (PRVTTVKIPVDKIGMVIGPKGQTINAIQDETGAEISIEDDGTIYVGATNGPAAQAAVERI). Residues 653–722 (GDRFLGTVVK…QRGKIYLDKV (70 aa)) form the S1 motif domain. Positions 722 to 785 (VRPEGAEAPA…SRPRRRTRRS (64 aa)) are disordered. Residues 734–764 (AAERPAGRDRGDRGPRDRGDRGGRGPDRGDS) show a composition bias toward basic and acidic residues.

Belongs to the polyribonucleotide nucleotidyltransferase family. It depends on Mg(2+) as a cofactor.

The protein localises to the cytoplasm. The enzyme catalyses RNA(n+1) + phosphate = RNA(n) + a ribonucleoside 5'-diphosphate. In terms of biological role, involved in mRNA degradation. Catalyzes the phosphorolysis of single-stranded polyribonucleotides processively in the 3'- to 5'-direction. This Salinispora tropica (strain ATCC BAA-916 / DSM 44818 / JCM 13857 / NBRC 105044 / CNB-440) protein is Polyribonucleotide nucleotidyltransferase.